Consider the following 396-residue polypeptide: MSKEKFERTKPHVNVGTIGHIDHGKTTLTAAITRVLSTKGQASFTDFSDIDKAPEEKERGITIATAHVEYETVNRHYAHVDCPGHADYIKNMITGAAQMDGAILVVAATDGAMPQTREHILLARQVGVPAMVVFLNKCDMVDDDELIELVEMELRELLDDYEFPGDDVPFIHGSALLALENPEDEDKAACIWALMEAIDSYIPEPERDVDQPFLMPVEDVFSISGRGTVATGRVERGIIKVGEEVAIVGVKDTVKTTCTGVEMFRKLLDEGRAGDNIGALLRGVKREDIERGQVLAKPGTITPHTKFKAECYILGKDEGGRHTPFFNGYRPQFYFRTTDVTGVVSLPEGIEMVMPGDNVSVDATLITPIAMDAGLRFAIREGGRTVGAGVISEIIE.

In terms of domain architecture, tr-type G spans 10–206 (KPHVNVGTIG…AIDSYIPEPE (197 aa)). A G1 region spans residues 19 to 26 (GHIDHGKT). 19 to 26 (GHIDHGKT) contributes to the GTP binding site. T26 serves as a coordination point for Mg(2+). The G2 stretch occupies residues 60–64 (GITIA). The interval 81 to 84 (DCPG) is G3. GTP contacts are provided by residues 81-85 (DCPGH) and 136-139 (NKCD). The interval 136–139 (NKCD) is G4. Residues 174–176 (SAL) are G5.

It belongs to the TRAFAC class translation factor GTPase superfamily. Classic translation factor GTPase family. EF-Tu/EF-1A subfamily. As to quaternary structure, monomer.

The protein localises to the cytoplasm. It carries out the reaction GTP + H2O = GDP + phosphate + H(+). Its function is as follows. GTP hydrolase that promotes the GTP-dependent binding of aminoacyl-tRNA to the A-site of ribosomes during protein biosynthesis. The protein is Elongation factor Tu 2 of Desulfotalea psychrophila (strain LSv54 / DSM 12343).